The sequence spans 234 residues: N-(5'-phosphoribosyl)anthranilate isomerase (234 aa).

The disordered stretch occupies residues 211 to 234; sequence RAASSSPRPVDGESPAFQRSEKAG.

Belongs to the TrpF family.

The enzyme catalyses N-(5-phospho-beta-D-ribosyl)anthranilate = 1-(2-carboxyphenylamino)-1-deoxy-D-ribulose 5-phosphate. The protein operates within amino-acid biosynthesis; L-tryptophan biosynthesis; L-tryptophan from chorismate: step 3/5. The sequence is that of N-(5'-phosphoribosyl)anthranilate isomerase from Afipia carboxidovorans (strain ATCC 49405 / DSM 1227 / KCTC 32145 / OM5) (Oligotropha carboxidovorans).